The chain runs to 391 residues: MRKLFTSESVTEGHPDKICDQISDAVLDAILERDPNGRVACETSVTTGMVLVTGEITTNCYVDIPKIVRNTIEAIGYTRAKYGFDSDTCAVLTSISEQSPDIAMGVDESLESKQGGMDKEDVIGAGDQGMMFGYANNETSEYMPMAISIAHKLSRRLSEVRKNGTLPYLRPDGKTQVTVEYEDNKAIRIDTIVVSTQHGPEVTREQIEKDIFEHVISKVVPVEFLDENTNYYINPTGRFVVGGPQGDAGLTGRKIIVDTYGGYGRHGGGAFSGKDPTKVDRSAAYAARWVAKNLVAAGVADKLEVQLAYAIGIAKPVSISVETFGTGKIDDRKIVEIINKVFDLRPSAIIKELNLRRPIYKQTAAYGHFGRTDVELPWESLNKLEEIKNLI.

His-14 serves as a coordination point for ATP. Residue Asp-16 coordinates Mg(2+). Residue Glu-42 participates in K(+) binding. Positions 55 and 98 each coordinate L-methionine. Positions Gln-98 to Glu-108 are flexible loop. ATP contacts are provided by residues Asp-172–Lys-174, Arg-238–Phe-239, Asp-247, Arg-253–Lys-254, Ala-270, and Lys-274. L-methionine is bound at residue Asp-247. An L-methionine-binding site is contributed by Lys-278.

This sequence belongs to the AdoMet synthase family. Homotetramer; dimer of dimers. Mg(2+) is required as a cofactor. It depends on K(+) as a cofactor.

The protein resides in the cytoplasm. It catalyses the reaction L-methionine + ATP + H2O = S-adenosyl-L-methionine + phosphate + diphosphate. It participates in amino-acid biosynthesis; S-adenosyl-L-methionine biosynthesis; S-adenosyl-L-methionine from L-methionine: step 1/1. Catalyzes the formation of S-adenosylmethionine (AdoMet) from methionine and ATP. The overall synthetic reaction is composed of two sequential steps, AdoMet formation and the subsequent tripolyphosphate hydrolysis which occurs prior to release of AdoMet from the enzyme. This is S-adenosylmethionine synthase from Clostridium tetani (strain Massachusetts / E88).